Reading from the N-terminus, the 753-residue chain is Neuroendocrine convertase 1 (753 aa).

An N-terminal signal peptide occupies residues 1–27 (MGRRAWTLQCTAFSLFCAWCAMNSVKA). The propeptide occupies 28–110 (KKQFVNEWAA…QQYEKERSKR (83 aa)). Residues 129 to 450 (QWYLQDTRMT…FGLLNAKALV (322 aa)) enclose the Peptidase S8 domain. D167 serves as the catalytic Charge relay system. A glycan (N-linked (GlcNAc...) asparagine) is linked at N173. H208 acts as the Charge relay system in catalysis. Disulfide bonds link C225–C374 and C317–C347. Residue S382 is the Charge relay system of the active site. N401 carries N-linked (GlcNAc...) asparagine glycosylation. The P/Homo B domain maps to 460 to 597 (SVPEKKECVV…KLILHGTSSQ (138 aa)). An intrachain disulfide couples C467 to C494. Disordered stretches follow at residues 617–657 (RRGV…RRDE) and 676–695 (SKNS…KPNI).

This sequence belongs to the peptidase S8 family. Furin subfamily. It depends on Ca(2+) as a cofactor.

The protein resides in the cytoplasmic vesicle. It localises to the secretory vesicle. The enzyme catalyses Release of protein hormones, neuropeptides and renin from their precursors, generally by hydrolysis of -Lys-Arg-|- bonds.. In terms of biological role, involved in the processing of hormone and other protein precursors at sites comprised of pairs of basic amino acid residues. Substrates include POMC, renin, enkephalin, dynorphin, somatostatin, insulin and AGRP. In Bos taurus (Bovine), this protein is Neuroendocrine convertase 1 (PCSK1).